A 201-amino-acid chain; its full sequence is Putative Ras-related protein Rab-1C (201 aa).

GTP-binding positions include 15–23 (GDSGVGKSC), 33–40 (YTESYIST), and 63–67 (DTAGQ). The Effector region motif lies at 37–45 (YISTIGVDF). Ser-76 carries the post-translational modification (Microbial infection) O-(2-cholinephosphoryl)serine. GTP-binding positions include 121-124 (NKSD) and 151-153 (SAK). The disordered stretch occupies residues 174–201 (GPGAASGGERPNLKIDSTPVKPAGGGCC). S-geranylgeranyl cysteine attachment occurs at residues Cys-200 and Cys-201.

Belongs to the small GTPase superfamily. Rab family. Post-translationally, (Microbial infection) Phosphocholinated at Ser-76 by L.pneumophila AnkX, leading to displace GDP dissociation inhibitors (GDI). Both GDP-bound and GTP-bound forms can be phosphocholinated. Dephosphocholinated by L.pneumophila Lem3, restoring accessibility to L.pneumophila GTPase effector LepB. (Microbial infection) Glycosylated by S.typhimurium protein Ssek3: arginine GlcNAcylation prevents GTPase activity, thereby disrupting vesicular protein transport from the endoplasmic reticulum (ER) to the Golgi compartment.

It localises to the membrane. The protein resides in the cytoplasm. It catalyses the reaction GTP + H2O = GDP + phosphate + H(+). Functionally, protein transport. Probably involved in vesicular traffic. This is Putative Ras-related protein Rab-1C (RAB1C) from Homo sapiens (Human).